Consider the following 198-residue polypeptide: Bcl-2-like protein 11 (198 aa).

The disordered stretch occupies residues methionine 1 to proline 72. Serine 69 is subject to Phosphoserine; by MAPK. Residues serine 77, serine 87, and serine 94 each carry the phosphoserine modification. Residues isoleucine 148–tyrosine 162 carry the BH3 motif.

Belongs to the Bcl-2 family. As to quaternary structure, forms heterodimers with a number of antiapoptotic Bcl-2 proteins, including MCL1, BCL2, BCL2L1 isoform Bcl-X(L), BCL2A1/BFL-1, BHRF1, and BCL2L2/BCLW. Does not heterodimerize with proapoptotic proteins such as BAD, BOK or BAK. Identified in a complex containing BCL2L11, DYNLL1 and BCL2L1 isoform Bcl-X(L); BH3 integrity is required for BCL2L1-binding. Interacts with YWHAZ. When phosphorylated, interacts with TRIM2; this interaction is associated with ubiquitination and degradation. Interacts with MCL1; may sequester BCL2L11 to prevent its pro-apoptotic activity. Interacts with GIMAP5. Interacts with BCL2L10/BCL-B. In terms of assembly, interacts (when phosphorylated) with USP27X; the interaction leads to BCL2L11 deubiquitination and stabilization. Interacts with humanin; the interaction prevents BIM-induced apoptosis. Does not interact with humanin. As to quaternary structure, interacts with BAX; the interaction may lead to BAX activation through conformational change. Does not interact with humanin. In terms of assembly, interacts with BAX; the interaction may lead to BAX activation through conformational change. Post-translationally, phosphorylation at Ser-69 by MAPK1/MAPK3 leads to interaction with TRIM2 and polyubiquitination, followed by proteasomal degradation. Deubiquitination catalyzed by USP27X stabilizes the protein. Ubiquitination by TRIM2 following phosphorylation by MAPK1/MAPK3 leads to proteasomal degradation. Conversely, deubiquitination catalyzed by USP27X stabilizes the protein. Isoform BimEL, isoform BimL and isoform BimS are the predominant isoforms and are widely expressed with tissue-specific variation. Isoform Bim-gamma is most abundantly expressed in small intestine and colon, and in lower levels in spleen, prostate, testis, heart, liver and kidney.

The protein resides in the endomembrane system. The protein localises to the mitochondrion. Its function is as follows. Induces apoptosis and anoikis. Isoform BimL is more potent than isoform BimEL. Isoform Bim-alpha1, isoform Bim-alpha2 and isoform Bim-alpha3 induce apoptosis, although less potent than isoform BimEL, isoform BimL and isoform BimS. Isoform Bim-gamma induces apoptosis. Isoform Bim-alpha3 induces apoptosis possibly through a caspase-mediated pathway. Isoform BimAC and isoform BimABC lack the ability to induce apoptosis. In Homo sapiens (Human), this protein is Bcl-2-like protein 11 (BCL2L11).